A 220-amino-acid polypeptide reads, in one-letter code: Putative NAD(P)H nitroreductase (220 aa).

Residue 155-160 (GASALG) coordinates NAD(+).

This sequence belongs to the nitroreductase family. Requires FMN as cofactor.

This chain is Putative NAD(P)H nitroreductase, found in Haemophilus influenzae (strain ATCC 51907 / DSM 11121 / KW20 / Rd).